The primary structure comprises 303 residues: Centromere protein O (303 aa).

The stretch at 38 to 77 (AALRKNQELVLELRKKRDELKAKIERHKAEIQAFRGREEA) forms a coiled coil.

This sequence belongs to the CENP-O/MCM21 family.

Its subcellular location is the nucleus. The protein resides in the chromosome. The protein localises to the centromere. Functionally, probable component of a centromeric complex involved in assembly of kinetochore proteins, mitotic progression and chromosome segregation. The sequence is that of Centromere protein O (cenpo) from Xenopus tropicalis (Western clawed frog).